Consider the following 188-residue polypeptide: Large ribosomal subunit protein eL18 (188 aa).

Residues 153–188 (GKAPGTPHSHTKPYVRSKGRKFERARGRRASCGYKN) are disordered. Positions 161–171 (SHTKPYVRSKG) are enriched in basic residues.

It belongs to the eukaryotic ribosomal protein eL18 family. As to quaternary structure, component of the large ribosomal subunit.

The protein resides in the cytoplasm. It localises to the cytosol. It is found in the rough endoplasmic reticulum. Component of the large ribosomal subunit. The ribosome is a large ribonucleoprotein complex responsible for the synthesis of proteins in the cell. The sequence is that of Large ribosomal subunit protein eL18 (rpl18) from Oreochromis mossambicus (Mozambique tilapia).